The chain runs to 120 residues: MVLQQYGIIAVFLVGGAATAVAALATNWLLRPKKPPEGDKLAAYECGLKTQGPTWIQFKVSYFLYALVFLLFDVETVFLYPWAVRFQALGLFAFAEMIVFIGILVLGLWYAWKEGALKWL.

3 consecutive transmembrane segments (helical) span residues 6-26, 63-83, and 89-109; these read YGII…ALAT, FLYA…YPWA, and LGLF…LGLW.

Belongs to the complex I subunit 3 family. As to quaternary structure, NDH-1 is composed of 14 different subunits. Subunits NuoA, H, J, K, L, M, N constitute the membrane sector of the complex.

The protein localises to the cell membrane. The catalysed reaction is a quinone + NADH + 5 H(+)(in) = a quinol + NAD(+) + 4 H(+)(out). NDH-1 shuttles electrons from NADH, via FMN and iron-sulfur (Fe-S) centers, to quinones in the respiratory chain. The immediate electron acceptor for the enzyme in this species is believed to be a menaquinone. Couples the redox reaction to proton translocation (for every two electrons transferred, four hydrogen ions are translocated across the cytoplasmic membrane), and thus conserves the redox energy in a proton gradient. In Moorella thermoacetica (strain ATCC 39073 / JCM 9320), this protein is NADH-quinone oxidoreductase subunit A.